Reading from the N-terminus, the 163-residue chain is Probable chemoreceptor glutamine deamidase CheD (163 aa).

Belongs to the CheD family.

It catalyses the reaction L-glutaminyl-[protein] + H2O = L-glutamyl-[protein] + NH4(+). Probably deamidates glutamine residues to glutamate on methyl-accepting chemotaxis receptors (MCPs), playing an important role in chemotaxis. The sequence is that of Probable chemoreceptor glutamine deamidase CheD from Borreliella burgdorferi (strain ATCC 35210 / DSM 4680 / CIP 102532 / B31) (Borrelia burgdorferi).